Reading from the N-terminus, the 309-residue chain is Protein FdhE (309 aa).

Belongs to the FdhE family.

It is found in the cytoplasm. In terms of biological role, necessary for formate dehydrogenase activity. This is Protein FdhE from Salmonella choleraesuis (strain SC-B67).